We begin with the raw amino-acid sequence, 405 residues long: Deoxyguanosinetriphosphate triphosphohydrolase-like protein (405 aa).

Residues 75–219 (RLTHTIEVAQ…AAIADDIAYN (145 aa)) enclose the HD domain.

The protein belongs to the dGTPase family. Type 2 subfamily.

The chain is Deoxyguanosinetriphosphate triphosphohydrolase-like protein from Rhizobium etli (strain CIAT 652).